The following is a 311-amino-acid chain: N-acetylmuramic acid 6-phosphate etherase (311 aa).

The SIS domain maps to 66–229 (VADRMARGGR…STITMIRLGK (164 aa)). Catalysis depends on Glu94, which acts as the Proton donor. The active site involves Glu125.

It belongs to the GCKR-like family. MurNAc-6-P etherase subfamily. Homodimer.

The catalysed reaction is N-acetyl-D-muramate 6-phosphate + H2O = N-acetyl-D-glucosamine 6-phosphate + (R)-lactate. The protein operates within amino-sugar metabolism; N-acetylmuramate degradation. Specifically catalyzes the cleavage of the D-lactyl ether substituent of MurNAc 6-phosphate, producing GlcNAc 6-phosphate and D-lactate. The protein is N-acetylmuramic acid 6-phosphate etherase of Streptomyces avermitilis (strain ATCC 31267 / DSM 46492 / JCM 5070 / NBRC 14893 / NCIMB 12804 / NRRL 8165 / MA-4680).